A 544-amino-acid chain; its full sequence is Chaperonin GroEL (544 aa).

ATP-binding positions include 29–32 (TLGP), Lys50, 86–90 (DGTTT), Gly414, and Asp494.

It belongs to the chaperonin (HSP60) family. In terms of assembly, forms a cylinder of 14 subunits composed of two heptameric rings stacked back-to-back. Interacts with the co-chaperonin GroES.

The protein resides in the cytoplasm. It catalyses the reaction ATP + H2O + a folded polypeptide = ADP + phosphate + an unfolded polypeptide.. Its function is as follows. Together with its co-chaperonin GroES, plays an essential role in assisting protein folding. The GroEL-GroES system forms a nano-cage that allows encapsulation of the non-native substrate proteins and provides a physical environment optimized to promote and accelerate protein folding. The sequence is that of Chaperonin GroEL from Amoebophilus asiaticus (strain 5a2).